The chain runs to 110 residues: uncharacterized protein (110 aa).

Basic and acidic residues predominate over residues 1 to 16; it reads MSVKLKYDKIDQRNGD. 2 disordered regions span residues 1–29 and 73–100; these read MSVKLKYDKIDQRNGDDSGGNHNNCGNGN and IKQQPQQQQPMNHTTPPSPHHLRFESPN. Over residues 20–29 the composition is skewed to low complexity; sequence GNHNNCGNGN.

This is an uncharacterized protein from Dictyostelium discoideum (Social amoeba).